Here is a 264-residue protein sequence, read N- to C-terminus: Major prion protein (264 aa).

Residues 1 to 24 form the signal peptide; the sequence is MVKRHIGSWILVLFVVMWSDVGLC. Residues 25 to 241 form an interaction with GRB2, ERI3 and SYN1 region; it reads KKRPKPGGGW…ESQAYYQRGA (217 aa). Residues 27–119 form a disordered region; the sequence is RPKPGGGWNT…WNKPSKPKTN (93 aa). A run of 6 repeats spans residues 54–62, 63–70, 71–78, 79–86, 87–94, and 95–103. Residues 54–103 form a 6 X 8 AA tandem repeats of P-H-G-G-G-W-G-Q region; that stretch reads SQGGGGWGQPHGGGWGQPHGGGWGQPHGGGWGQPHGGGWGQPHGGGGWGQ. Gly residues predominate over residues 55-105; it reads QGGGGWGQPHGGGWGQPHGGGWGQPHGGGWGQPHGGGWGQPHGGGGWGQGG. Cu(2+) contacts are provided by His72, Gly73, Gly74, His80, Gly81, Gly82, His88, Gly89, Gly90, His96, Gly98, and Gly99. The cysteines at positions 190 and 225 are disulfide-linked. 2 N-linked (GlcNAc...) asparagine glycosylation sites follow: Asn192 and Asn208. A lipid anchor (GPI-anchor amidated alanine) is attached at Ala241. The propeptide at 242 to 264 is removed in mature form; it reads SVILFSSPPVILLISLLIFLIVG.

Belongs to the prion family. Monomer and homodimer. Has a tendency to aggregate into amyloid fibrils containing a cross-beta spine, formed by a steric zipper of superposed beta-strands. Soluble oligomers may represent an intermediate stage on the path to fibril formation. Copper binding may promote oligomerization. Interacts with GRB2, APP, ERI3/PRNPIP and SYN1. Mislocalized cytosolically exposed PrP interacts with MGRN1; this interaction alters MGRN1 subcellular location and causes lysosomal enlargement. Interacts with KIAA1191.

The protein resides in the cell membrane. Its subcellular location is the golgi apparatus. Its function is as follows. Its primary physiological function is unclear. Has cytoprotective activity against internal or environmental stresses. May play a role in neuronal development and synaptic plasticity. May be required for neuronal myelin sheath maintenance. May play a role in iron uptake and iron homeostasis. Soluble oligomers are toxic to cultured neuroblastoma cells and induce apoptosis (in vitro). Association with GPC1 (via its heparan sulfate chains) targets PRNP to lipid rafts. Also provides Cu(2+) or Zn(2+) for the ascorbate-mediated GPC1 deaminase degradation of its heparan sulfate side chains. The polypeptide is Major prion protein (PRNP) (Bubalus bubalis (Domestic water buffalo)).